Here is a 54-residue protein sequence, read N- to C-terminus: UPF0391 membrane protein BAB1_1670 (54 aa).

Transmembrane regions (helical) follow at residues 5–25 and 29–48; these read VLVF…GIAG and GIAQ…SLIA.

It belongs to the UPF0391 family.

The protein localises to the cell membrane. The sequence is that of UPF0391 membrane protein BAB1_1670 from Brucella abortus (strain 2308).